Reading from the N-terminus, the 641-residue chain is SUMO-activating enzyme subunit 2 (641 aa).

ATP-binding positions include 24–29, Asp48, 56–59, Lys72, 95–96, and 117–122; these read GAGGIG, NLNR, SI, and DNNAAR. Cys158 and Cys161 together coordinate Zn(2+). Catalysis depends on Cys173, which acts as the Glycyl thioester intermediate. A Glycyl lysine isopeptide (Lys-Gly) (interchain with G-Cter in SUMO) cross-link involves residue Lys190. Residue Lys236 forms a Glycyl lysine isopeptide (Lys-Gly) (interchain with G-Cter in SUMO1) linkage. Residues Lys257 and Lys275 each participate in a glycyl lysine isopeptide (Lys-Gly) (interchain with G-Cter in SUMO) cross-link. Positions 439 and 442 each coordinate Zn(2+). Residues 546-641 are disordered; the sequence is GDVPEKGPQK…EEDDDIIALD (96 aa). Over residues 556 to 579 the composition is skewed to polar residues; it reads PSEQSVKNITNGSDDGAQPSTSKA. Residues 582 to 594 are compositionally biased toward acidic residues; that stretch reads QDDVLIVDSDEES. Glycyl lysine isopeptide (Lys-Gly) (interchain with G-Cter in SUMO) cross-links involve residues Lys610, Lys612, and Lys623. Over residues 630-641 the composition is skewed to acidic residues; that stretch reads PVEEDDDIIALD.

The protein belongs to the ubiquitin-activating E1 family. As to quaternary structure, heterodimer of sae1 and uba2/sae2. The heterodimer corresponds to the two domains that are encoded on a single polypeptide chain in ubiquitin-activating enzyme E1. Interacts with ube2i. Post-translationally, sumoylated with SUMO1 and SUMO2/3 and by UBC9. Sumoylation at Lys-236 inhibits enzymatic activity. Sumoylation at the C-terminal lysine cluster plays an essential role in nuclear trafficking.

The protein localises to the cytoplasm. It is found in the nucleus. It functions in the pathway protein modification; protein sumoylation. In terms of biological role, the heterodimer acts as an E1 ligase for sumo1, sumo2, and sumo3. It mediates ATP-dependent activation of sumo proteins followed by formation of a thioester bond between a sumo protein and a conserved active site cysteine residue on uba2/sae2. This Xenopus tropicalis (Western clawed frog) protein is SUMO-activating enzyme subunit 2 (uba2).